Here is a 280-residue protein sequence, read N- to C-terminus: Dehydrogenase/reductase SDR family member 2, mitochondrial (280 aa).

Residues 1 to 23 (MLSAVARGYQGWFHPCARLSVRM) constitute a mitochondrion transit peptide. Serine 46 and isoleucine 48 together coordinate NAD(+). At lysine 96 the chain carries N6-acetyllysine; alternate. Lysine 96 is subject to N6-succinyllysine; alternate. Substrate is bound at residue serine 172. NAD(+) is bound by residues tyrosine 185 and lysine 189. Tyrosine 185 acts as the Proton acceptor in catalysis. Lysine 219 is subject to N6-acetyllysine; alternate. Residue lysine 219 is modified to N6-succinyllysine; alternate. Threonine 220 contacts NAD(+). A Phosphoserine modification is found at serine 223. N6-succinyllysine is present on lysine 237.

This sequence belongs to the short-chain dehydrogenases/reductases (SDR) family. In terms of assembly, directly interacts with MDM2; this interaction occurs in the nucleus and does not target DHRS2 to degradation. As to expression, widely expressed, with highest levels in liver and kidney, followed by heart, spleen, skeletal muscle and placenta. In hemopoietic cells, expressed in dendritic cells, but not in monocytes, macrophages, granulocytes, nor in B and T lymphocytes.

The protein localises to the mitochondrion matrix. Its subcellular location is the nucleus. In terms of biological role, NADPH-dependent oxidoreductase which catalyzes the reduction of dicarbonyl compounds. Displays reductase activity in vitro with 3,4-hexanedione, 2,3-heptanedione and 1-phenyl-1,2-propanedione as substrates. May function as a dicarbonyl reductase in the enzymatic inactivation of reactive carbonyls involved in covalent modification of cellular components. Also displays a minor hydroxysteroid dehydrogenase activity toward bile acids such as ursodeoxycholic acid (UDCA) and isoursodeoxycholic acid (isoUDCA), which makes it unlikely to control hormone levels. Doesn't show any activity in vitro with retinoids and sugars as substrates. Attenuates MDM2-mediated p53/TP53 degradation, leading to p53/TP53 stabilization and increased transcription activity, resulting in the accumulation of MDM2 and CDKN1A/p21. Reduces proliferation, migration and invasion of cancer cells and well as the production of ROS in cancer. The chain is Dehydrogenase/reductase SDR family member 2, mitochondrial from Homo sapiens (Human).